The primary structure comprises 645 residues: Protein FAM47B (645 aa).

3 stretches are compositionally biased toward basic and acidic residues: residues 1–11 (MGDRRPQDRPR), 238–251 (EPPE…RVDP), and 288–299 (PETRVSHLHPEP). 2 disordered regions span residues 1-23 (MGDR…WYCD) and 168-321 (AREK…SLCP).

This sequence belongs to the FAM47 family.

The polypeptide is Protein FAM47B (FAM47B) (Homo sapiens (Human)).